A 128-amino-acid chain; its full sequence is uncharacterized protein (128 aa).

Residues 25-61 (LPNRLPEGSTVGPKPDSSWEAGSQGNWGLTSSGAGQD) form a disordered region. The span at 44 to 61 (EAGSQGNWGLTSSGAGQD) shows a compositional bias: polar residues.

This is an uncharacterized protein from Homo sapiens (Human).